The following is a 37-amino-acid chain: VFIDVSCSVSKECWAPCKAAVGTDRGKCMGKKCRCYX.

3 disulfide bridges follow: C7–C28, C13–C33, and C17–C35.

The protein belongs to the short scorpion toxin superfamily. Potassium channel inhibitor family. Alpha-KTx 01 subfamily. Expressed by the venom gland.

It is found in the secreted. Functionally, blocks selectively the high conductance calcium-activated (maxi-K) potassium channels. In Centruroides limbatus (Bark scorpion), this protein is Potassium channel toxin alpha-KTx 1.4.